The following is a 146-amino-acid chain: 3-dehydroquinate dehydratase (146 aa).

The active-site Proton acceptor is Tyr-23. Substrate contacts are provided by Asn-75, His-81, and Asp-88. His-101 serves as the catalytic Proton donor. Residues 102–103 (LS) and Arg-112 each bind substrate.

It belongs to the type-II 3-dehydroquinase family. In terms of assembly, homododecamer.

It catalyses the reaction 3-dehydroquinate = 3-dehydroshikimate + H2O. It participates in metabolic intermediate biosynthesis; chorismate biosynthesis; chorismate from D-erythrose 4-phosphate and phosphoenolpyruvate: step 3/7. In terms of biological role, catalyzes a trans-dehydration via an enolate intermediate. The chain is 3-dehydroquinate dehydratase from Saccharophagus degradans (strain 2-40 / ATCC 43961 / DSM 17024).